The chain runs to 458 residues: MPPKEAQASQKLFGTDGVRGKANVYPMTAEVAMQLGRALAFLIRNGPHRHRVIVGKDTRLSGYMLEQALASGLTSMGVDVELVGPLPTPGISNITTSMRADAGAVISASHNPYEDNGIKFFWRDGFKLPDETEGKIEELVSSGSIDSIRPTATKIGRAFRMEDARGRYIVFLKATFPRELTLEGMTIVVDCANGAAYKTAPAVLEELGAKVIALGVSPDGKNINHKCGALYPENLAKTVVKHGAHLGIALDGDADRLIVVDEKGKVVDGDAIMAICTGELVARKQLKKKMLVSTVMSNIGLERAVARWGVKVARTRVGDRYVVDEMRRNGYNLGGEQSGHLIFLDHTTTGDGTLAALQLLAVMCRAGKPLSELASIFEPVPQTLVNVVVKQKKELGELPTVMKVIKSVEQRLGNTGRVLVRFSGTEPKARVLIEGEDAARNQAYAKEIADALSKALSV.

S109 acts as the Phosphoserine intermediate in catalysis. Residues S109, D251, D253, and D255 each contribute to the Mg(2+) site. A Phosphoserine modification is found at S109.

Belongs to the phosphohexose mutase family. Mg(2+) serves as cofactor. Activated by phosphorylation.

It carries out the reaction alpha-D-glucosamine 1-phosphate = D-glucosamine 6-phosphate. Catalyzes the conversion of glucosamine-6-phosphate to glucosamine-1-phosphate. This chain is Phosphoglucosamine mutase, found in Myxococcus xanthus (strain DK1622).